Here is a 58-residue protein sequence, read N- to C-terminus: Weak neurotoxin D2B (58 aa).

Cystine bridges form between C3-C24, C17-C41, and C43-C54.

In terms of tissue distribution, expressed by the venom gland.

It is found in the secreted. Functionally, binds to muscle nicotinic acetylcholine receptor (nAChR) and inhibit acetylcholine from binding to the receptor, thereby impairing neuromuscular transmission. This chain is Weak neurotoxin D2B, found in Micrurus pyrrhocryptus (Coral snake).